We begin with the raw amino-acid sequence, 234 residues long: Demethylmenaquinone methyltransferase (234 aa).

S-adenosyl-L-methionine contacts are provided by residues T58, D79, and 104 to 105 (NA).

This sequence belongs to the class I-like SAM-binding methyltransferase superfamily. MenG/UbiE family.

The enzyme catalyses a 2-demethylmenaquinol + S-adenosyl-L-methionine = a menaquinol + S-adenosyl-L-homocysteine + H(+). It functions in the pathway quinol/quinone metabolism; menaquinone biosynthesis; menaquinol from 1,4-dihydroxy-2-naphthoate: step 2/2. Functionally, methyltransferase required for the conversion of demethylmenaquinol (DMKH2) to menaquinol (MKH2). This is Demethylmenaquinone methyltransferase from Lysinibacillus sphaericus (strain C3-41).